Consider the following 434-residue polypeptide: Na(+)/H(+) antiporter NhaA 1 (434 aa).

The next 11 membrane-spanning stretches (helical) occupy residues 34-54, 73-93, 111-131, 141-161, 171-191, 194-214, 233-253, 278-298, 313-333, 346-366, and 380-400; these read GLLL…PWSA, LTLG…VAGL, ALPV…YVLW, GWAI…AVIS, FLLT…ALFY, ELHL…ALLV, VLVH…GFAV, SAGL…VGGF, VVTG…WLLA, WVDV…SLLI, and HVKV…TGVL.

The protein belongs to the NhaA Na(+)/H(+) (TC 2.A.33) antiporter family.

It localises to the cell membrane. It carries out the reaction Na(+)(in) + 2 H(+)(out) = Na(+)(out) + 2 H(+)(in). Its function is as follows. Na(+)/H(+) antiporter that extrudes sodium in exchange for external protons. This chain is Na(+)/H(+) antiporter NhaA 1, found in Nocardioides sp. (strain ATCC BAA-499 / JS614).